We begin with the raw amino-acid sequence, 598 residues long: Polypeptide N-acetylgalactosaminyltransferase 17 (598 aa).

Residues 1–6 lie on the Cytoplasmic side of the membrane; that stretch reads MASLRR. A helical; Signal-anchor for type II membrane protein transmembrane segment spans residues 7-27; sequence VKVLLVLNLIAVAGFVIFLAK. Residues 28–598 lie on the Lumenal side of the membrane; that stretch reads CRPIAVRSGD…QRWAIKNPIK (571 aa). N-linked (GlcNAc...) asparagine glycosylation occurs at asparagine 50. Disulfide bonds link cysteine 142–cysteine 373 and cysteine 364–cysteine 443. The segment at 151 to 262 is catalytic subdomain A; the sequence is LPQISIIFIF…AGWAEPVLSR (112 aa). Positions 192 and 223 each coordinate substrate. Mn(2+) contacts are provided by aspartate 246, histidine 248, and histidine 378. A catalytic subdomain B region spans residues 319-381; the sequence is PIRTPAMIGC…PCSRVAHIER (63 aa). Substrate contacts are provided by arginine 381 and tyrosine 386. Asparagine 461 and asparagine 486 each carry an N-linked (GlcNAc...) asparagine glycan. Residues 465–594 form the Ricin B-type lectin domain; that stretch reads AYGELRNNKA…SCTGQRWAIK (130 aa). Cystine bridges form between cysteine 478/cysteine 494, cysteine 526/cysteine 541, and cysteine 568/cysteine 586.

This sequence belongs to the glycosyltransferase 2 family. GalNAc-T subfamily. The cofactor is Mn(2+).

The protein resides in the golgi apparatus membrane. The enzyme catalyses L-seryl-[protein] + UDP-N-acetyl-alpha-D-galactosamine = a 3-O-[N-acetyl-alpha-D-galactosaminyl]-L-seryl-[protein] + UDP + H(+). It catalyses the reaction L-threonyl-[protein] + UDP-N-acetyl-alpha-D-galactosamine = a 3-O-[N-acetyl-alpha-D-galactosaminyl]-L-threonyl-[protein] + UDP + H(+). The protein operates within protein modification; protein glycosylation. May catalyze the initial reaction in O-linked oligosaccharide biosynthesis, the transfer of an N-acetyl-D-galactosamine residue to a serine or threonine residue on the protein receptor. The chain is Polypeptide N-acetylgalactosaminyltransferase 17 from Mus musculus (Mouse).